A 983-amino-acid polypeptide reads, in one-letter code: Kinesin-like protein KIN-14I (983 aa).

Positions 44 to 166 constitute a Calponin-homology (CH) domain; the sequence is ASRRYEAANW…CVLAIKSYDE (123 aa). 2 stretches are compositionally biased toward polar residues: residues 203–214 and 278–287; these read SLSRTSSINNEK and ESTSSQNNRS. Disordered regions lie at residues 203-227 and 276-295; these read SLSR…LSSP and PRES…LGER. Residues 399-724 form the Kinesin motor domain; the sequence is SIRVYCRVRP…LKFAERVATV (326 aa). Residue 481–488 coordinates ATP; that stretch reads GQTGSGKT. Residues 731 to 758 are a coiled coil; it reads VNNDTSDVKELKEQIATLKAALARKEAE. Disordered regions lie at residues 802–824 and 921–983; these read TVNS…DDRS and TRSN…NARH. Over residues 939–951 the composition is skewed to polar residues; it reads SPQSRNNSNNTVS.

The protein belongs to the TRAFAC class myosin-kinesin ATPase superfamily. Kinesin family. KIN-14 subfamily.

This chain is Kinesin-like protein KIN-14I, found in Arabidopsis thaliana (Mouse-ear cress).